We begin with the raw amino-acid sequence, 664 residues long: PAN2-PAN3 deadenylation complex subunit PAN3 (664 aa).

2 disordered regions span residues 1–27 (MATT…GREN) and 54–134 (DPHK…PGTM). The segment at 27–56 (NAKDTLCRNVTIYGRCRYEDKGCAFNHDPH) adopts a C3H1-type zinc-finger fold. The segment covering 74–96 (DSPSFTPSILSSNGSSPTSQSAT) has biased composition (polar residues). Low complexity predominate over residues 115–131 (PRSISSRSNSSTPTTRP). Residues 265–525 (QTLPNTQLPA…NIDIFITGIS (261 aa)) form a pseudokinase domain region. Residues Arg-317, 366 to 373 (DYHPLSKT), and 425 to 426 (SK) contribute to the ATP site. A coiled-coil region spans residues 526–564 (STLMSTFDSALHLDDQLTSDLSRELENGRLVRLMTKLNF). Residues 565–664 (VNERPEYEHD…LKPSASRRLH (100 aa)) form a knob domain region.

The protein belongs to the protein kinase superfamily. PAN3 family. As to quaternary structure, homodimer. Forms a heterotrimer with a catalytic subunit pan2 to form the poly(A)-nuclease (PAN) deadenylation complex. Interacts (via PAM-2 motif) with poly(A)-binding protein pab1 (via PABC domain), conferring substrate specificity of the enzyme complex.

The protein resides in the cytoplasm. Regulatory subunit of the poly(A)-nuclease (PAN) deadenylation complex, one of two cytoplasmic mRNA deadenylases involved in mRNA turnover. PAN specifically shortens poly(A) tails of RNA and the activity is stimulated by poly(A)-binding protein pab1. PAN deadenylation is followed by rapid degradation of the shortened mRNA tails by the CCR4-NOT complex. Deadenylated mRNAs are then degraded by two alternative mechanisms, namely exosome-mediated 3'-5' exonucleolytic degradation, or deadenylation-dependent mRNA decaping and subsequent 5'-3' exonucleolytic degradation by xrn1. May also be involved in post-transcriptional maturation of mRNA poly(A) tails. pan3 acts as a positive regulator for PAN activity, recruiting the catalytic subunit pan2 to mRNA via its interaction with RNA and with pab1. This is PAN2-PAN3 deadenylation complex subunit PAN3 from Aspergillus niger (strain ATCC MYA-4892 / CBS 513.88 / FGSC A1513).